The primary structure comprises 371 residues: Anhydro-N-acetylmuramic acid kinase (371 aa).

12-19 (GTSADGID) serves as a coordination point for ATP.

Belongs to the anhydro-N-acetylmuramic acid kinase family.

The catalysed reaction is 1,6-anhydro-N-acetyl-beta-muramate + ATP + H2O = N-acetyl-D-muramate 6-phosphate + ADP + H(+). Its pathway is amino-sugar metabolism; 1,6-anhydro-N-acetylmuramate degradation. The protein operates within cell wall biogenesis; peptidoglycan recycling. Catalyzes the specific phosphorylation of 1,6-anhydro-N-acetylmuramic acid (anhMurNAc) with the simultaneous cleavage of the 1,6-anhydro ring, generating MurNAc-6-P. Is required for the utilization of anhMurNAc either imported from the medium or derived from its own cell wall murein, and thus plays a role in cell wall recycling. This is Anhydro-N-acetylmuramic acid kinase from Saccharophagus degradans (strain 2-40 / ATCC 43961 / DSM 17024).